Here is a 541-residue protein sequence, read N- to C-terminus: Tegument protein UL21 homolog (541 aa).

This sequence belongs to the alphaherpesvirinae UL21 protein family. In terms of assembly, interacts (via C-terminus) with UL16.

The protein resides in the virion tegument. It is found in the host cytoplasm. The protein localises to the host nucleus. Its function is as follows. May participate in DNA packaging/capsid maturation events. Promotes efficient incorporation of tegument proteins UL46, UL49, and US3 homologs into virions. May also play a role in capsid transport to the trans-Golgi network (TGN). This Varicella-zoster virus (strain Oka vaccine) (HHV-3) protein is Tegument protein UL21 homolog.